Consider the following 1119-residue polypeptide: Protein translocase subunit SecA (1119 aa).

Residues glutamine 175, 213 to 217, and aspartate 714 contribute to the ATP site; that span reads GEGKT. The Zn(2+) site is built by cysteine 1106, cysteine 1108, cysteine 1117, and cysteine 1118.

The protein belongs to the SecA family. In terms of assembly, monomer and homodimer. Part of the essential Sec protein translocation apparatus which comprises SecA, SecYEG and auxiliary proteins SecDF. Other proteins may also be involved. It depends on Zn(2+) as a cofactor.

It localises to the cell inner membrane. It is found in the cytoplasm. It catalyses the reaction ATP + H2O + cellular proteinSide 1 = ADP + phosphate + cellular proteinSide 2.. Its function is as follows. Part of the Sec protein translocase complex. Interacts with the SecYEG preprotein conducting channel. Has a central role in coupling the hydrolysis of ATP to the transfer of proteins into and across the cell membrane, serving as an ATP-driven molecular motor driving the stepwise translocation of polypeptide chains across the membrane. The protein is Protein translocase subunit SecA of Azobacteroides pseudotrichonymphae genomovar. CFP2.